Reading from the N-terminus, the 249-residue chain is uncharacterized protein (249 aa).

Residue 11–34 (IFGGRSQIGGELARRLAAGATMVL) coordinates NADP(+). Position 142 (Ser-142) interacts with substrate. Catalysis depends on Tyr-155, which acts as the Proton acceptor.

Belongs to the short-chain dehydrogenases/reductases (SDR) family.

This is an uncharacterized protein from Mycobacterium tuberculosis (strain ATCC 25618 / H37Rv).